The following is a 68-amino-acid chain: Small ribosomal subunit protein bS21 (68 aa).

The protein belongs to the bacterial ribosomal protein bS21 family.

This chain is Small ribosomal subunit protein bS21, found in Paracoccus denitrificans (strain Pd 1222).